A 314-amino-acid polypeptide reads, in one-letter code: WD repeat-containing protein 38 (314 aa).

WD repeat units lie at residues 19–58 (QHGG…LLWR), 61–100 (GHTG…CLRV), 103–142 (GHQR…MLRL), 145–184 (GHRD…PAVS), 190–228 (GHSA…LLIQ), 231–272 (GHVT…ETLK), and 274–312 (VLDV…PRDP). The disordered stretch occupies residues 294 to 314 (AADQTRRQISRTSKSPRDPQT).

This Homo sapiens (Human) protein is WD repeat-containing protein 38 (WDR38).